Here is a 1620-residue protein sequence, read N- to C-terminus: ABC-type organic anion transporter ABCA8A (1620 aa).

Transmembrane regions (helical) follow at residues 30-50 (TFLEFLYTALILLSLILFLQL), 224-244 (CFLFFCIIRFSPLTYYISAGV), 263-283 (SAFWLSWGLLYGVIVFVVTLL), 294-314 (VFLTGFMVIFSLFFFYGLSLI), 328-348 (FLTDLVVFLLTVSCGSLGFTA), 357-377 (LEWLLSLLSPFAFMLGMVQLL), and 397-417 (IGTIFMLFFDGVFYLLLTFYF). N-linked (GlcNAc...) asparagine glycosylation is found at N454 and N482. The ABC transporter 1 domain occupies 478–713 (IRIRNLTKDY…WGIGYHLSLQ (236 aa)). Residue 514 to 521 (GHSGAGKS) participates in ATP binding. Residues 861–881 (IVILILVLGIGLLHILSANIY) form a helical membrane-spanning segment. N967 is a glycosylation site (N-linked (GlcNAc...) asparagine). A run of 7 helical transmembrane segments spans residues 979–999 (CFPVLVDIVSNGLLGLFAPSA), 1019–1039 (YLAYFFLWVLLMACVPPYISM), 1068–1088 (ALFEVPVYCALILSIFIAFYA), 1105–1125 (ILYVGGYAMSVIFMTYVISFI), 1133–1153 (SGLWSLCFYIVSFFSMCFMLI), 1159–1179 (ISLFVLIALVPPATLGGCTLL), and 1196–1216 (EYSYLFFLAPLLHFAIFVVIL). One can recognise an ABC transporter 2 domain in the interval 1284-1517 (LRKEYKGKKK…FGKEYLLEMK (234 aa)). 1322–1329 (GHNGAGKS) serves as a coordination point for ATP.

It belongs to the ABC transporter superfamily. ABCA family. Expressed in lung, heart, liver, skeletal muscle and testis. Highly expressed in the liver, and is also abundant in heart and skeletal muscle. Highly expressed in heart.

It is found in the cell membrane. The protein localises to the basolateral cell membrane. The enzyme catalyses taurocholate(in) + ATP + H2O = taurocholate(out) + ADP + phosphate + H(+). The catalysed reaction is cholesterol(in) + ATP + H2O = cholesterol(out) + ADP + phosphate + H(+). Its activity is regulated as follows. Cholesterol efflux is increased by extracellularly applied taurocholate. Its function is as follows. Mediates cholesterol and taurocholate efflux. Through the interaction with ABCA1 potentiates the cholesterol efflux to lipid-free APOA1, in turn regulates high-density lipoprotein cholesterol levels. This chain is ABC-type organic anion transporter ABCA8A, found in Mus musculus (Mouse).